We begin with the raw amino-acid sequence, 936 residues long: ABC transporter A family member 5 (936 aa).

7 helical membrane-spanning segments follow: residues 34–54 (LIVIPFYLCVLLVGIQVLFDT), 340–360 (ASLIGPIFFTWVILLLFPVML), 393–413 (FLAISIVYIICLMIFGSAIGL), 422–442 (SIQFIFYFLCINLQISIAFLV), 454–474 (VAAYLYVFGSGLLGAFLFQFL), 484–501 (WIYIMELYPGFSLYRGLY), and 527–547 (AMEEIFYIIIVEWFVALIAAY). An ABC transporter domain is found at 614-851 (IVCDNLKKVY…YGGSYVLTMT (238 aa)). Position 652-659 (652-659 (GPNGAGKT)) interacts with ATP.

The protein belongs to the ABC transporter superfamily. ABCA family. CPR flippase (TC 3.A.1.211) subfamily.

The protein resides in the membrane. The sequence is that of ABC transporter A family member 5 (ABCA5) from Arabidopsis thaliana (Mouse-ear cress).